The following is a 34-amino-acid chain: Cytochrome b6-f complex subunit 5 (34 aa).

The helical transmembrane segment at 5–25 (LLSGIVLGLVPVTLAGLFVTA) threads the bilayer.

This sequence belongs to the PetG family. As to quaternary structure, the 4 large subunits of the cytochrome b6-f complex are cytochrome b6, subunit IV (17 kDa polypeptide, PetD), cytochrome f and the Rieske protein, while the 4 small subunits are PetG, PetL, PetM and PetN. The complex functions as a dimer.

Its subcellular location is the plastid. It is found in the chloroplast thylakoid membrane. Functionally, component of the cytochrome b6-f complex, which mediates electron transfer between photosystem II (PSII) and photosystem I (PSI), cyclic electron flow around PSI, and state transitions. PetG is required for either the stability or assembly of the cytochrome b6-f complex. In Oltmannsiellopsis viridis (Marine flagellate), this protein is Cytochrome b6-f complex subunit 5.